The sequence spans 613 residues: Vitamin B12 transporter BtuB (613 aa).

Residues 1–22 (MQKSLLAIAMASLLTPISYLHA) form the signal peptide. The TonB box signature appears at 29-36 (DTVVVTAN). The 114-residue stretch at 41–154 (VESSVLASIS…IGGVIHIKTI (114 aa)) folds into the TBDR plug domain. The TBDR beta-barrel domain maps to 159–613 (QTKHDANLGY…NWFATVNYRF (455 aa)). Residues 591 to 613 (HSSGGKYYVGEGRNWFATVNYRF) carry the TonB C-terminal box motif.

The protein belongs to the TonB-dependent receptor family. BtuB (TC 1.B.14.3.1) subfamily.

It is found in the cell outer membrane. Its function is as follows. Involved in the active translocation of vitamin B12 (cyanocobalamin) across the outer membrane to the periplasmic space. It derives its energy for transport by interacting with the trans-periplasmic membrane protein TonB. This Vibrio vulnificus (strain YJ016) protein is Vitamin B12 transporter BtuB.